The chain runs to 362 residues: UDP-N-acetylglucosamine--N-acetylmuramyl-(pentapeptide) pyrophosphoryl-undecaprenol N-acetylglucosamine transferase (362 aa).

UDP-N-acetyl-alpha-D-glucosamine contacts are provided by residues 15-17 (TGG), Asn-127, Arg-165, Ser-191, Ile-247, 266-271 (ALTVSE), and Gln-292.

It belongs to the glycosyltransferase 28 family. MurG subfamily.

It is found in the cell inner membrane. The catalysed reaction is di-trans,octa-cis-undecaprenyl diphospho-N-acetyl-alpha-D-muramoyl-L-alanyl-D-glutamyl-meso-2,6-diaminopimeloyl-D-alanyl-D-alanine + UDP-N-acetyl-alpha-D-glucosamine = di-trans,octa-cis-undecaprenyl diphospho-[N-acetyl-alpha-D-glucosaminyl-(1-&gt;4)]-N-acetyl-alpha-D-muramoyl-L-alanyl-D-glutamyl-meso-2,6-diaminopimeloyl-D-alanyl-D-alanine + UDP + H(+). It participates in cell wall biogenesis; peptidoglycan biosynthesis. In terms of biological role, cell wall formation. Catalyzes the transfer of a GlcNAc subunit on undecaprenyl-pyrophosphoryl-MurNAc-pentapeptide (lipid intermediate I) to form undecaprenyl-pyrophosphoryl-MurNAc-(pentapeptide)GlcNAc (lipid intermediate II). In Shewanella oneidensis (strain ATCC 700550 / JCM 31522 / CIP 106686 / LMG 19005 / NCIMB 14063 / MR-1), this protein is UDP-N-acetylglucosamine--N-acetylmuramyl-(pentapeptide) pyrophosphoryl-undecaprenol N-acetylglucosamine transferase.